An 887-amino-acid chain; its full sequence is Alanine--tRNA ligase (887 aa).

H573, H577, C676, and H680 together coordinate Zn(2+).

This sequence belongs to the class-II aminoacyl-tRNA synthetase family. The cofactor is Zn(2+).

The protein localises to the cytoplasm. The enzyme catalyses tRNA(Ala) + L-alanine + ATP = L-alanyl-tRNA(Ala) + AMP + diphosphate. Catalyzes the attachment of alanine to tRNA(Ala) in a two-step reaction: alanine is first activated by ATP to form Ala-AMP and then transferred to the acceptor end of tRNA(Ala). Also edits incorrectly charged Ser-tRNA(Ala) and Gly-tRNA(Ala) via its editing domain. The sequence is that of Alanine--tRNA ligase from Corynebacterium jeikeium (strain K411).